A 439-amino-acid polypeptide reads, in one-letter code: IAA-amino acid hydrolase ILR1-like 2 (439 aa).

The first 21 residues, 1 to 21 (MALNKLLSLTFQLLLFLLSVS), serve as a signal peptide directing secretion. Positions 137, 139, 173, 197, and 397 each coordinate Mn(2+). The Prevents secretion from ER signature appears at 436 to 439 (HEEL).

This sequence belongs to the peptidase M20 family. Monomer. The cofactor is Mn(2+). Expressed in leaves, stems, siliques, seeds and flowers. Detected in the distal tips of cotyledons and seedling leaves, hydathodes of leaves from mature plants, pollen, ovules and developing seeds.

The protein resides in the endoplasmic reticulum lumen. Hydrolyzes certain amino acid conjugates of the plant growth regulator indole-3-acetic acid (IAA), including IAA-Ala, IAA-Leu, IAA-Met, IAA-Phe, IAA-Ser, IAA-Thr, IAA-Tyr and IAA-Val. Is the most efficient enzyme of the ILL family for IAA-Ala. Not important for IAA-Leu hydrolysis in roots. May act with ILR1 to provide free IAA to germinating seedlings. The protein is IAA-amino acid hydrolase ILR1-like 2 of Arabidopsis thaliana (Mouse-ear cress).